The chain runs to 239 residues: Ribonuclease PH (239 aa).

Phosphate-binding positions include Arg-86 and 124-126 (GTR).

Belongs to the RNase PH family. In terms of assembly, homohexameric ring arranged as a trimer of dimers.

It catalyses the reaction tRNA(n+1) + phosphate = tRNA(n) + a ribonucleoside 5'-diphosphate. In terms of biological role, phosphorolytic 3'-5' exoribonuclease that plays an important role in tRNA 3'-end maturation. Removes nucleotide residues following the 3'-CCA terminus of tRNAs; can also add nucleotides to the ends of RNA molecules by using nucleoside diphosphates as substrates, but this may not be physiologically important. Probably plays a role in initiation of 16S rRNA degradation (leading to ribosome degradation) during starvation. The polypeptide is Ribonuclease PH (Rickettsia akari (strain Hartford)).